We begin with the raw amino-acid sequence, 424 residues long: Chitinase CLP (424 aa).

Positions 1–18 (MSLHLLLAVSLCVALASS) are cleaved as a signal peptide. Positions 43–405 (AATSLYTVPI…DEEKQRLGFS (363 aa)) constitute a Peptidase A1 domain. Residues N139, N345, and N419 are each glycosylated (N-linked (GlcNAc...) asparagine).

The protein belongs to the peptidase A1 family. Expressed in roots. Expressed at low levels in leaf sheaths, stems and flowers.

The protein resides in the secreted. Its subcellular location is the extracellular space. It localises to the apoplast. It carries out the reaction Random endo-hydrolysis of N-acetyl-beta-D-glucosaminide (1-&gt;4)-beta-linkages in chitin and chitodextrins.. Functionally, chitinase that possesses antifungal activity. Inhibits the growth of the fungal pathogen Rhizoctonia solani by degrading the fungal cell wall. Does not possess inhibiting activity against fungal endo-1,4-beta-D-xylanases belonging to glycoside hydrolase family 10 (GH10) and family 11 (GH11). Involved in the regulation of plant growth by regulating the intracellular calcium ion concentration in roots. This chain is Chitinase CLP, found in Oryza sativa subsp. japonica (Rice).